The chain runs to 668 residues: Major S-layer protein (668 aa).

A signal peptide spans 1 to 24 (MKRFAAVTLAALMLLTVFASAASA). Asn36, Asn65, Asn111, Asn265, Asn583, Asn596, Asn602, Asn608, Asn617, and Asn635 each carry an N-linked (GlcNAc...) asparagine glycan. Residues 584–650 (ETTSITKPDE…ESNGSPGFGV (67 aa)) form a disordered region. Positions 596-611 (NETVSDNETMPDNTSS) are enriched in polar residues. Residues 631 to 641 (EPTDNETEPDE) are compositionally biased toward acidic residues. Residues 644–664 (GSPGFGVVLGLAGLLGVVYLV) form a helical membrane-spanning segment.

The protein belongs to the Methanosarcinales S-layer protein family. Post-translationally, glycosylated.

The protein resides in the secreted. Its subcellular location is the cell wall. It localises to the S-layer. It is found in the cell membrane. S-layer protein. The S-layer is a paracrystalline mono-layered assembly of proteins which coat the surface of the cell. The protein is Major S-layer protein of Methanosarcina barkeri (strain Fusaro / DSM 804).